We begin with the raw amino-acid sequence, 299 residues long: Taste receptor type 2 member 50 (299 aa).

M1 is a topological domain (extracellular). A helical membrane pass occupies residues 2 to 22 (VTFLHIFFSILILVLFVLGNF). At 23–55 (ANGFIALVNFIDLVKRKKISSADQILTALAVSR) the chain is on the cytoplasmic side. Residues 56-76 (IGLLWALLLNWYLTVLNPAFY) traverse the membrane as a helical segment. Residues 77–87 (SVELRITSYNA) are Extracellular-facing. The chain crosses the membrane as a helical span at residues 88 to 108 (WVVTNHFSMWLAASLSIFYLL). Over 109–126 (KIANFSNLIFLHLKRRVR) the chain is Cytoplasmic. Residues 127-147 (SVILVILLGPLTFLVCHLFVA) form a helical membrane-spanning segment. Over 148–181 (NMDESMSAEEYEGNMTGKLKLRNTVHLSYLTVTT) the chain is Extracellular. Residue N161 is glycosylated (N-linked (GlcNAc...) asparagine). The helical transmembrane segment at 182–202 (LWSFIPFTLSLISFLMLICSL) threads the bilayer. Over 203 to 229 (CKHVKKMQLHGEGSQDLSTKVHIKALQ) the chain is Cytoplasmic. Residues 230-250 (TLISFLLLCAIFFLFLIISIW) form a helical membrane-spanning segment. Residues 251–259 (NPRRLQNDP) are Extracellular-facing. Residues 260–280 (VVVVSKAVGNIYLALDSFILI) traverse the membrane as a helical segment. Residues 281–299 (WRTKKLKHTFLLILCQIRC) lie on the Cytoplasmic side of the membrane.

The protein belongs to the G-protein coupled receptor T2R family.

Its subcellular location is the membrane. In terms of biological role, receptor that may play a role in the perception of bitterness and is gustducin-linked. May play a role in sensing the chemical composition of the gastrointestinal content. The activity of this receptor may stimulate alpha gustducin, mediate PLC-beta-2 activation and lead to the gating of TRPM5. This chain is Taste receptor type 2 member 50 (TAS2R50), found in Pongo pygmaeus (Bornean orangutan).